The following is a 272-amino-acid chain: Sulfate transporter CysZ (272 aa).

4 consecutive transmembrane segments (helical) span residues 29 to 49, 66 to 86, 148 to 168, and 219 to 239; these read FVIM…WLFI, WLSF…LLLF, IIAL…VPVL, and FVPV…TLMW.

Belongs to the CysZ family.

The protein localises to the cell inner membrane. High affinity, high specificity proton-dependent sulfate transporter, which mediates sulfate uptake. Provides the sulfur source for the cysteine synthesis pathway. In Haemophilus influenzae (strain PittGG), this protein is Sulfate transporter CysZ.